We begin with the raw amino-acid sequence, 105 residues long: UPF0235 protein RPR_04990 (105 aa).

This sequence belongs to the UPF0235 family.

This chain is UPF0235 protein RPR_04990, found in Rickettsia peacockii (strain Rustic).